The following is a 739-amino-acid chain: NAD(P)H-quinone oxidoreductase subunit 5, chloroplastic (739 aa).

16 helical membrane-spanning segments follow: residues 9-29 (WIIP…LLLF), 40-60 (WSFQ…NLSI), 89-109 (IDPL…MVLI), 125-145 (FAYM…SNLI), 147-167 (IYIF…FWFT), 184-204 (IGDF…GSFE), 224-244 (LFVT…SAQF), 258-278 (TPIS…FLVA), 289-311 (YIMN…LALA), 318-338 (GLAF…GMGS), 354-374 (ALLF…VGYS), 396-416 (NTFL…CFWS), 427-447 (YSTI…FYIF), 546-566 (LFPL…GIPF), 605-625 (VSSV…YKPP), and 718-738 (ISSY…VFFI).

It belongs to the complex I subunit 5 family. As to quaternary structure, NDH is composed of at least 16 different subunits, 5 of which are encoded in the nucleus.

It localises to the plastid. The protein resides in the chloroplast thylakoid membrane. The enzyme catalyses a plastoquinone + NADH + (n+1) H(+)(in) = a plastoquinol + NAD(+) + n H(+)(out). The catalysed reaction is a plastoquinone + NADPH + (n+1) H(+)(in) = a plastoquinol + NADP(+) + n H(+)(out). NDH shuttles electrons from NAD(P)H:plastoquinone, via FMN and iron-sulfur (Fe-S) centers, to quinones in the photosynthetic chain and possibly in a chloroplast respiratory chain. The immediate electron acceptor for the enzyme in this species is believed to be plastoquinone. Couples the redox reaction to proton translocation, and thus conserves the redox energy in a proton gradient. The protein is NAD(P)H-quinone oxidoreductase subunit 5, chloroplastic (ndhF) of Coffea arabica (Arabian coffee).